The primary structure comprises 552 residues: Glutamate--tRNA ligase (552 aa).

The 'HIGH' region motif lies at 41–51; that stretch reads PSPTGFQHIGG. The 'KMSKS' region signature appears at 293–297; that stretch reads KLSKR. Lys296 contacts ATP.

Belongs to the class-I aminoacyl-tRNA synthetase family. Glutamate--tRNA ligase type 1 subfamily. In terms of assembly, monomer.

Its subcellular location is the cytoplasm. It catalyses the reaction tRNA(Glu) + L-glutamate + ATP = L-glutamyl-tRNA(Glu) + AMP + diphosphate. Catalyzes the attachment of glutamate to tRNA(Glu) in a two-step reaction: glutamate is first activated by ATP to form Glu-AMP and then transferred to the acceptor end of tRNA(Glu). This chain is Glutamate--tRNA ligase, found in Clostridium perfringens (strain SM101 / Type A).